The following is a 502-amino-acid chain: ATP synthase subunit alpha (502 aa).

169-176 (GDRQTGKT) lines the ATP pocket.

This sequence belongs to the ATPase alpha/beta chains family. As to quaternary structure, F-type ATPases have 2 components, CF(1) - the catalytic core - and CF(0) - the membrane proton channel. CF(1) has five subunits: alpha(3), beta(3), gamma(1), delta(1), epsilon(1). CF(0) has three main subunits: a(1), b(2) and c(9-12). The alpha and beta chains form an alternating ring which encloses part of the gamma chain. CF(1) is attached to CF(0) by a central stalk formed by the gamma and epsilon chains, while a peripheral stalk is formed by the delta and b chains.

It localises to the cell membrane. The catalysed reaction is ATP + H2O + 4 H(+)(in) = ADP + phosphate + 5 H(+)(out). Produces ATP from ADP in the presence of a proton gradient across the membrane. The alpha chain is a regulatory subunit. The sequence is that of ATP synthase subunit alpha from Priestia megaterium (strain ATCC 12872 / QMB1551) (Bacillus megaterium).